Reading from the N-terminus, the 101-residue chain is Urease subunit beta (101 aa).

This sequence belongs to the urease beta subunit family. In terms of assembly, heterotrimer of UreA (gamma), UreB (beta) and UreC (alpha) subunits. Three heterotrimers associate to form the active enzyme.

It is found in the cytoplasm. The catalysed reaction is urea + 2 H2O + H(+) = hydrogencarbonate + 2 NH4(+). It functions in the pathway nitrogen metabolism; urea degradation; CO(2) and NH(3) from urea (urease route): step 1/1. In Paraburkholderia phymatum (strain DSM 17167 / CIP 108236 / LMG 21445 / STM815) (Burkholderia phymatum), this protein is Urease subunit beta.